Here is a 297-residue protein sequence, read N- to C-terminus: Thoeris protein ThsA (297 aa).

Helical transmembrane passes span 32-52 (ALSI…FLDL) and 57-77 (RLII…VQFI).

Its subcellular location is the cell membrane. With respect to regulation, activated by a signal molecule generated by ThsB. Functionally, probable membrane protein component of the Thoeris antiviral defense system, composed of ThsA and ThsB. Expression of ThsA and ThsB in B.subtilis (strain BEST7003) confers resistance to phages SBSphiC, SBSphiJ and SPO1. Activation by a signal generated by ThsB leads to phage resistance. The sequence is that of Thoeris protein ThsA from Bacillus amyloliquefaciens (strain Y2) (Bacillus amyloliquefaciens subsp. plantarum (strain B9601-Y2)).